A 218-amino-acid chain; its full sequence is Protein-L-isoaspartate O-methyltransferase 1 (218 aa).

Ser-69 is a catalytic residue.

The protein belongs to the methyltransferase superfamily. L-isoaspartyl/D-aspartyl protein methyltransferase family.

It localises to the cytoplasm. The catalysed reaction is [protein]-L-isoaspartate + S-adenosyl-L-methionine = [protein]-L-isoaspartate alpha-methyl ester + S-adenosyl-L-homocysteine. Its function is as follows. Catalyzes the methyl esterification of L-isoaspartyl residues in peptides and proteins that result from spontaneous decomposition of normal L-aspartyl and L-asparaginyl residues. It plays a role in the repair and/or degradation of damaged proteins. This is Protein-L-isoaspartate O-methyltransferase 1 from Marinobacter nauticus (strain ATCC 700491 / DSM 11845 / VT8) (Marinobacter aquaeolei).